A 257-amino-acid chain; its full sequence is Major prion protein (257 aa).

A signal peptide spans 1–24; the sequence is MVKSHIGSWLLVLFVATWSDIGFC. The tract at residues 25 to 41 is interaction with ADGRG6; that stretch reads KKRPKPGGGWNTGGSRY. The interaction with GRB2, ERI3 and SYN1 stretch occupies residues 25 to 234; the sequence is KKRPKPGGGW…ESEAYYQRGA (210 aa). Residues 27-114 form a disordered region; the sequence is RPKPGGGWNT…KPSKPKTNMK (88 aa). Tandem repeats lie at residues 54-62, 63-70, 71-78, 79-86, and 87-95. The segment at 54-95 is 5 X 8 AA tandem repeats of P-H-G-G-G-W-G-Q; that stretch reads PQGGGGWGQPHGGGWGQPHGGGWGQPHGGGWGQPHGGGGWGQ. A compositionally biased stretch (gly residues) spans 55-101; sequence QGGGGWGQPHGGGWGQPHGGGWGQPHGGGWGQPHGGGGWGQGGGSHG. Residues His-64, Gly-65, Gly-66, His-72, Gly-73, Gly-74, His-80, Gly-81, Gly-82, His-88, Gly-90, and Gly-91 each contribute to the Cu(2+) site. A disulfide bridge connects residues Cys-183 and Cys-218. N-linked (GlcNAc...) asparagine glycosylation is found at Asn-185 and Asn-201. Residue Ala-234 is the site of GPI-anchor amidated alanine attachment. The propeptide at 235–257 is removed in mature form; that stretch reads SAILFSPPPVILLISLLILLIVG.

The protein belongs to the prion family. As to quaternary structure, monomer and homodimer. Has a tendency to aggregate into amyloid fibrils containing a cross-beta spine, formed by a steric zipper of superposed beta-strands. Soluble oligomers may represent an intermediate stage on the path to fibril formation. Copper binding may promote oligomerization. Interacts with GRB2, APP, ERI3/PRNPIP and SYN1. Mislocalized cytosolically exposed PrP interacts with MGRN1; this interaction alters MGRN1 subcellular location and causes lysosomal enlargement. Interacts with APP. Interacts with KIAA1191. Interacts with ADGRG6.

It localises to the cell membrane. It is found in the golgi apparatus. Its primary physiological function is unclear. May play a role in neuronal development and synaptic plasticity. May be required for neuronal myelin sheath maintenance. May promote myelin homeostasis through acting as an agonist for ADGRG6 receptor. May play a role in iron uptake and iron homeostasis. Soluble oligomers are toxic to cultured neuroblastoma cells and induce apoptosis (in vitro). Association with GPC1 (via its heparan sulfate chains) targets PRNP to lipid rafts. Also provides Cu(2+) or Zn(2+) for the ascorbate-mediated GPC1 deaminase degradation of its heparan sulfate side chains. This Neovison vison (American mink) protein is Major prion protein (PRNP).